The chain runs to 444 residues: Phosphoglucosamine mutase (444 aa).

Residue S100 is the Phosphoserine intermediate of the active site. Mg(2+) contacts are provided by S100, D240, D242, and D244. A Phosphoserine modification is found at S100.

The protein belongs to the phosphohexose mutase family. Mg(2+) is required as a cofactor. In terms of processing, activated by phosphorylation.

The enzyme catalyses alpha-D-glucosamine 1-phosphate = D-glucosamine 6-phosphate. In terms of biological role, catalyzes the conversion of glucosamine-6-phosphate to glucosamine-1-phosphate. The protein is Phosphoglucosamine mutase of Desulforamulus reducens (strain ATCC BAA-1160 / DSM 100696 / MI-1) (Desulfotomaculum reducens).